A 152-amino-acid polypeptide reads, in one-letter code: Transcriptional regulator MraZ (152 aa).

SpoVT-AbrB domains are found at residues 5-52 (ASAI…PADE) and 81-124 (AHEI…DEAQ).

Belongs to the MraZ family. Forms oligomers.

It is found in the cytoplasm. Its subcellular location is the nucleoid. This is Transcriptional regulator MraZ from Shewanella amazonensis (strain ATCC BAA-1098 / SB2B).